The primary structure comprises 421 residues: Calreticulin (421 aa).

A signal peptide spans 1-22 (MAFRVPNSSLLSLILLSLLAIA). An N-linked (GlcNAc...) asparagine glycan is attached at Asn-56. The cysteines at positions 110 and 142 are disulfide-linked. The an alpha-D-glucoside site is built by Tyr-114, Lys-116, Tyr-133, and Asp-140. Residue Asn-156 is glycosylated (N-linked (GlcNAc...) asparagine). 7 tandem repeats follow at residues 196 to 207 (KQTGSLYSDWDL), 215 to 226 (DPEAKKPEDWED), 232 to 243 (DPEDKKPEGYDD), 250 to 261 (DPDAKKPEDWDD), 265 to 275 (GEWTAPTIPNP), 279 to 289 (GEWKPKKIKNP), and 293 to 303 (GKWKAPLIDNP). Residues 196–261 (KQTGSLYSDW…DAKKPEDWDD (66 aa)) form a 4 X approximate repeats region. Residues 217–283 (EAKKPEDWED…NPEYKGEWKP (67 aa)) form a disordered region. Over residues 223 to 232 (DWEDQEYIPD) the composition is skewed to acidic residues. Residues 233-257 (PEDKKPEGYDDIPKEITDPDAKKPE) are compositionally biased toward basic and acidic residues. Positions 265–303 (GEWTAPTIPNPEYKGEWKPKKIKNPNFKGKWKAPLIDNP) are 3 X approximate repeats. Residue Glu-323 participates in an alpha-D-glucoside binding. Residues 350–380 (EETWGKQKDAEKAAFEELEKKLQEEESKEDP) show a composition bias toward basic and acidic residues. Residues 350 to 421 (EETWGKQKDA…ETEAEKHDEL (72 aa)) are disordered. Over residues 381 to 399 (VDSDAEDDDNEAEDGEESD) the composition is skewed to acidic residues. Positions 418 to 421 (HDEL) match the Prevents secretion from ER motif.

Belongs to the calreticulin family.

Its subcellular location is the endoplasmic reticulum lumen. Molecular calcium-binding chaperone promoting folding, oligomeric assembly and quality control in the ER via the calreticulin/calnexin cycle. This lectin may interact transiently with almost all of the monoglucosylated glycoproteins that are synthesized in the ER. The polypeptide is Calreticulin (Prunus armeniaca (Apricot)).